Here is a 202-residue protein sequence, read N- to C-terminus: UPF0316 protein SH1041 (202 aa).

The next 3 helical transmembrane spans lie at 8-28 (PWSM…FLTM), 40-60 (MAAA…GMVM), and 66-86 (IQNI…GMKI).

This sequence belongs to the UPF0316 family.

Its subcellular location is the cell membrane. This chain is UPF0316 protein SH1041, found in Staphylococcus haemolyticus (strain JCSC1435).